The following is a 256-amino-acid chain: Chemotaxis protein methyltransferase (256 aa).

The 256-residue stretch at 1 to 256 (MDTYSVFTTK…PADTFFYQKR (256 aa)) folds into the CheR-type methyltransferase domain. Residues N67, S69, R73, E107, D130, 185 to 186 (NL), and 201 to 202 (RN) each bind S-adenosyl-L-methionine.

Monomer.

It catalyses the reaction L-glutamyl-[protein] + S-adenosyl-L-methionine = [protein]-L-glutamate 5-O-methyl ester + S-adenosyl-L-homocysteine. Its function is as follows. Methylation of the membrane-bound methyl-accepting chemotaxis proteins (MCP) to form gamma-glutamyl methyl ester residues in MCP. CheR is responsible for the chemotactic adaptation to repellents. The protein is Chemotaxis protein methyltransferase (cheR) of Bacillus subtilis (strain 168).